The chain runs to 276 residues: Ribosomal RNA small subunit methyltransferase A (276 aa).

Residues N27, L29, G54, E75, D101, and N123 each coordinate S-adenosyl-L-methionine.

Belongs to the class I-like SAM-binding methyltransferase superfamily. rRNA adenine N(6)-methyltransferase family. RsmA subfamily.

The protein localises to the cytoplasm. It carries out the reaction adenosine(1518)/adenosine(1519) in 16S rRNA + 4 S-adenosyl-L-methionine = N(6)-dimethyladenosine(1518)/N(6)-dimethyladenosine(1519) in 16S rRNA + 4 S-adenosyl-L-homocysteine + 4 H(+). In terms of biological role, specifically dimethylates two adjacent adenosines (A1518 and A1519) in the loop of a conserved hairpin near the 3'-end of 16S rRNA in the 30S particle. May play a critical role in biogenesis of 30S subunits. The sequence is that of Ribosomal RNA small subunit methyltransferase A from Bartonella bacilliformis (strain ATCC 35685 / KC583 / Herrer 020/F12,63).